Reading from the N-terminus, the 628-residue chain is MDTNTLPPKPSISPSIASSFPTVKPFSSQNSTTSNPELSHIEKESNASSIIISQQPLSPSNISSAAPLDETHIATKASASLRNNNVSPHIPSPSSFSSSSSSDLDKSMLDEKHPDSEDITAVSLSTPPFPESIDVARFSSEEKKILSRIRRKLDLRIITCLWITYFLSRSVTYSISLSLTMNKHQGHSLLQTVSGLNYHTLSVGTGLSYVSLIIFDLPSNLLMTRADPRLWLSRIQVTTGIIGACHAVLGTKGSSASGFIALRFFNGLAIAGMWPGFAFYTSRFYRDQHLGKRIGWYYTAAQISSVATSLLSAAFQKMDGLHGLYGYQWMFLIWGVVAFTQGLFLPRWLPCIKHNQHNEKWISWIRIPKFLGFLKASENTGLTPEEEEVHAIYMAEMQVGKSWTLTDLADAFLDVRLWPPIFMFFGVVGISNGLVNYSSLIISEINENFSSVTVSLLVAPIWVFDAIAILTVLPLHDRFHKKMLFFVGSCLFVLAGLLITTFVSNVWGRYVGLLILGFGLGPTVPIIMTWVSSAMGPSHGDVGVAAGLAIVSGLGNLGSVVATSALYSGWKADTTFRRSNETMCGMVGIAIVASIVMHMVQKFNIRRFPFKRIYACLSERRKKELSVT.

2 disordered regions span residues 1-65 and 80-125; these read MDTN…ISSA and SLRN…VSLS. Low complexity predominate over residues 12 to 21; the sequence is ISPSIASSFP. The span at 25 to 37 shows a compositional bias: polar residues; it reads PFSSQNSTTSNPE. Low complexity-rich tracts occupy residues 48-64 and 87-102; these read SSII…NISS and SPHI…SSSS. Positions 103 to 116 are enriched in basic and acidic residues; it reads DLDKSMLDEKHPDS. The next 12 membrane-spanning stretches (helical) occupy residues 157-177, 203-223, 230-250, 259-279, 294-314, 324-344, 417-437, 454-474, 483-503, 511-531, 542-562, and 583-603; these read IITC…SISL, VGTG…NLLM, LWLS…AVLG, FIAL…GFAF, IGWY…LSAA, LYGY…QGLF, LWPP…LVNY, VSLL…TVLP, MLFF…TTFV, VGLL…MTWV, VGVA…SVVA, and MCGM…VQKF.

It belongs to the major facilitator superfamily. Allantoate permease family.

It localises to the membrane. This is an uncharacterized protein from Schizosaccharomyces pombe (strain 972 / ATCC 24843) (Fission yeast).